The chain runs to 428 residues: Citrate synthase (428 aa).

Catalysis depends on residues His-265, His-306, and Asp-363.

Belongs to the citrate synthase family. As to quaternary structure, homohexamer.

The catalysed reaction is oxaloacetate + acetyl-CoA + H2O = citrate + CoA + H(+). It participates in carbohydrate metabolism; tricarboxylic acid cycle; isocitrate from oxaloacetate: step 1/2. Allosterically inhibited by NADH. This chain is Citrate synthase (gltA), found in Pseudomonas aeruginosa (strain ATCC 15692 / DSM 22644 / CIP 104116 / JCM 14847 / LMG 12228 / 1C / PRS 101 / PAO1).